The sequence spans 695 residues: Putative pentatricopeptide repeat-containing protein At1g77010, mitochondrial (695 aa).

The transit peptide at 1–64 (MILKYNSSYR…KGFLSSIVIV (64 aa)) directs the protein to the mitochondrion. PPR repeat units follow at residues 61–91 (IVIV…MPDR), 92–122 (NYFS…MPER), 123–157 (DGYS…DVVT), 159–184 (NSLL…LNFS), 186–220 (DAIT…GVEC), 221–251 (DSKM…IREP), 252–282 (DDHS…KSNR), 283–313 (CVIL…MRNE), 317–351 (DSRT…GLID), 352–382 (DIVV…VESY), 383–417 (DTIL…SLIS), 418–448 (WNSM…DLPT), 449–483 (DEVS…GLDS), 484–514 (DQVV…MVKS), 515–549 (DEVP…GIRP), 550–585 (TQIT…GFVP), and 586–616 (DKEH…MPFD). A type E motif; degenerate region spans residues 621–695 (MWSSILRGCV…KNPGSSWTDC (75 aa)).

This sequence belongs to the PPR family. PCMP-E subfamily.

The protein localises to the mitochondrion. The chain is Putative pentatricopeptide repeat-containing protein At1g77010, mitochondrial (PCMP-E5) from Arabidopsis thaliana (Mouse-ear cress).